Consider the following 217-residue polypeptide: Small ribosomal subunit protein uS3 (217 aa).

Positions 38–106 (IRKYIDNALQ…KVHINVIEIK (69 aa)) constitute a KH type-2 domain.

The protein belongs to the universal ribosomal protein uS3 family. Part of the 30S ribosomal subunit. Forms a tight complex with proteins S10 and S14.

Functionally, binds the lower part of the 30S subunit head. Binds mRNA in the 70S ribosome, positioning it for translation. This Staphylococcus saprophyticus subsp. saprophyticus (strain ATCC 15305 / DSM 20229 / NCIMB 8711 / NCTC 7292 / S-41) protein is Small ribosomal subunit protein uS3.